We begin with the raw amino-acid sequence, 515 residues long: Glucose-6-phosphate 1-dehydrogenase (515 aa).

The residue at position 2 (Ala-2) is an N-acetylalanine. Ser-8 carries the phosphoserine modification. Thr-10 bears the Phosphothreonine mark. NADP(+)-binding positions include 38 to 45 and Arg-72; that span reads GASGDLAK. Lys-89 is subject to N6-acetyllysine. Residues Tyr-147 and Lys-171 each contribute to the NADP(+) site. D-glucose 6-phosphate contacts are provided by residues Lys-171, 201 to 205, Glu-239, and Asp-258; that span reads HYLGK. Lys-171 is subject to N6-(2-hydroxyisobutyryl)lysine; alternate. Residue Lys-171 is modified to N6-acetyllysine; alternate. Residue His-263 is the Proton acceptor of the active site. An NADP(+)-binding site is contributed by Arg-357. D-glucose 6-phosphate-binding residues include Lys-360 and Arg-365. Lys-366, Arg-370, and Arg-393 together coordinate NADP(+). Gln-395 contacts D-glucose 6-phosphate. NADP(+) contacts are provided by residues 401-403 and 421-423; these read YTK and DLT. Lys-403 carries the post-translational modification N6-acetyllysine. At Lys-432 the chain carries N6-acetyllysine. Arg-487 serves as a coordination point for NADP(+). An N6-acetyllysine modification is found at Lys-497. Tyr-503 and Trp-509 together coordinate NADP(+). Tyr-503 is modified (phosphotyrosine).

It belongs to the glucose-6-phosphate dehydrogenase family. As to quaternary structure, homotetramer; dimer of dimers. Interacts with SIRT2; the interaction is enhanced by H(2)O(2) treatment. Forms a ternary complex with ALDOB and TP53; this interaction is direct. ALDOB stabilizes the complex inhibiting G6PD activity and keeping oxidative pentose phosphate metabolism in check. In terms of processing, acetylated by ELP3 at Lys-403; acetylation inhibits its homodimerization and enzyme activity. Deacetylated by SIRT2 at Lys-403; deacetylation stimulates its enzyme activity.

The protein localises to the cytoplasm. Its subcellular location is the cytosol. The protein resides in the membrane. It catalyses the reaction D-glucose 6-phosphate + NADP(+) = 6-phospho-D-glucono-1,5-lactone + NADPH + H(+). Its pathway is carbohydrate degradation; pentose phosphate pathway; D-ribulose 5-phosphate from D-glucose 6-phosphate (oxidative stage): step 1/3. Cytosolic glucose-6-phosphate dehydrogenase that catalyzes the first and rate-limiting step of the oxidative branch within the pentose phosphate pathway/shunt, an alternative route to glycolysis for the dissimilation of carbohydrates and a major source of reducing power and metabolic intermediates for fatty acid and nucleic acid biosynthetic processes. The protein is Glucose-6-phosphate 1-dehydrogenase (G6pdx) of Rattus norvegicus (Rat).